The primary structure comprises 124 residues: uncharacterized protein (124 aa).

2 disordered regions span residues 1–26 and 100–124; these read MRRQ…QPRP and IPGQ…GLRR. Over residues 102–115 the composition is skewed to polar residues; the sequence is GQQSRNCSLPQTKY.

It localises to the cytoplasm. Its subcellular location is the cytoskeleton. The protein localises to the cilium basal body. This is an uncharacterized protein from Rattus norvegicus (Rat).